The sequence spans 433 residues: Enolase (433 aa).

Residue Q167 participates in (2R)-2-phosphoglycerate binding. The active-site Proton donor is E209. Positions 246, 287, and 314 each coordinate Mg(2+). Positions 339, 368, 369, and 390 each coordinate (2R)-2-phosphoglycerate. K339 acts as the Proton acceptor in catalysis.

It belongs to the enolase family. Mg(2+) serves as cofactor.

Its subcellular location is the cytoplasm. The protein resides in the secreted. The protein localises to the cell surface. It carries out the reaction (2R)-2-phosphoglycerate = phosphoenolpyruvate + H2O. It participates in carbohydrate degradation; glycolysis; pyruvate from D-glyceraldehyde 3-phosphate: step 4/5. Functionally, catalyzes the reversible conversion of 2-phosphoglycerate (2-PG) into phosphoenolpyruvate (PEP). It is essential for the degradation of carbohydrates via glycolysis. This Prochlorococcus marinus (strain NATL2A) protein is Enolase.